Consider the following 185-residue polypeptide: Ribosome-recycling factor (185 aa).

This sequence belongs to the RRF family.

The protein resides in the cytoplasm. Responsible for the release of ribosomes from messenger RNA at the termination of protein biosynthesis. May increase the efficiency of translation by recycling ribosomes from one round of translation to another. This is Ribosome-recycling factor from Oceanobacillus iheyensis (strain DSM 14371 / CIP 107618 / JCM 11309 / KCTC 3954 / HTE831).